Here is a 224-residue protein sequence, read N- to C-terminus: Peroxynitrite isomerase 2 (224 aa).

The GXWXGXG motif lies at 71–77 (GVWRGEG). The heme b site is built by lysine 187 and histidine 214.

Belongs to the nitrobindin family. In terms of assembly, homodimer. It depends on heme b as a cofactor.

The enzyme catalyses peroxynitrite = nitrate. It functions in the pathway nitrogen metabolism. In terms of biological role, heme-binding protein able to scavenge peroxynitrite and to protect free L-tyrosine against peroxynitrite-mediated nitration, by acting as a peroxynitrite isomerase that converts peroxynitrite to nitrate. Therefore, this protein likely plays a role in peroxynitrite sensing and in the detoxification of reactive nitrogen and oxygen species (RNS and ROS, respectively). Is able to bind nitric oxide (NO) in vitro, but may act as a sensor of peroxynitrite levels in vivo. The chain is Peroxynitrite isomerase 2 from Mycobacterium sp. (strain JLS).